We begin with the raw amino-acid sequence, 319 residues long: Beta-ketoacyl-[acyl-carrier-protein] synthase III (319 aa).

Active-site residues include Cys-110 and His-246. Positions 247–251 are ACP-binding; the sequence is QANYR. Asn-276 is an active-site residue.

The protein belongs to the thiolase-like superfamily. FabH family. Homodimer.

The protein resides in the cytoplasm. The enzyme catalyses malonyl-[ACP] + acetyl-CoA + H(+) = 3-oxobutanoyl-[ACP] + CO2 + CoA. The protein operates within lipid metabolism; fatty acid biosynthesis. Its function is as follows. Catalyzes the condensation reaction of fatty acid synthesis by the addition to an acyl acceptor of two carbons from malonyl-ACP. Catalyzes the first condensation reaction which initiates fatty acid synthesis and may therefore play a role in governing the total rate of fatty acid production. Possesses both acetoacetyl-ACP synthase and acetyl transacylase activities. Its substrate specificity determines the biosynthesis of branched-chain and/or straight-chain of fatty acids. The polypeptide is Beta-ketoacyl-[acyl-carrier-protein] synthase III (Lactobacillus delbrueckii subsp. bulgaricus (strain ATCC 11842 / DSM 20081 / BCRC 10696 / JCM 1002 / NBRC 13953 / NCIMB 11778 / NCTC 12712 / WDCM 00102 / Lb 14)).